The following is a 156-amino-acid chain: SsrA-binding protein (156 aa).

Belongs to the SmpB family.

The protein localises to the cytoplasm. Functionally, required for rescue of stalled ribosomes mediated by trans-translation. Binds to transfer-messenger RNA (tmRNA), required for stable association of tmRNA with ribosomes. tmRNA and SmpB together mimic tRNA shape, replacing the anticodon stem-loop with SmpB. tmRNA is encoded by the ssrA gene; the 2 termini fold to resemble tRNA(Ala) and it encodes a 'tag peptide', a short internal open reading frame. During trans-translation Ala-aminoacylated tmRNA acts like a tRNA, entering the A-site of stalled ribosomes, displacing the stalled mRNA. The ribosome then switches to translate the ORF on the tmRNA; the nascent peptide is terminated with the 'tag peptide' encoded by the tmRNA and targeted for degradation. The ribosome is freed to recommence translation, which seems to be the essential function of trans-translation. This chain is SsrA-binding protein, found in Lactiplantibacillus plantarum (strain ATCC BAA-793 / NCIMB 8826 / WCFS1) (Lactobacillus plantarum).